The following is a 290-amino-acid chain: 3-keto-disaccharide hydrolase (290 aa).

The first 19 residues, 1 to 19, serve as a signal peptide directing secretion; sequence MKKVFYPLACCLAAGVLVS. A lipid anchor (N-palmitoyl cysteine) is attached at Cys20. Cys20 is lipidated: S-diacylglycerol cysteine.

It is found in the cell membrane. It catalyses the reaction 3-dehydro-alpha,alpha-trehalose + H2O = 3-dehydro-D-glucose + D-glucose. Functionally, 3-keto-disaccharide hydrolase that preferentially hydrolyzes 3-keto-trehalose (3-dehydro-alpha,alpha-trehalose). Important for disaccharide utilization in the human gut. Also shows hydrolysis activity with the glucosinolates glucoraphanin or glucobrassicin, but with much lower efficiency. The chain is 3-keto-disaccharide hydrolase from Bacteroides thetaiotaomicron (strain ATCC 29148 / DSM 2079 / JCM 5827 / CCUG 10774 / NCTC 10582 / VPI-5482 / E50).